The chain runs to 320 residues: MQTRKTLSWIKEEITRSISLSLMLSIITHASLSNAYPIFAQQGYENPREATGRIVCANCHLANKPVDIEVPQTVLPDTVFEAVVRIPYDMQIKQVLANGKKGALNVGAVLILPEGFELAPPDRISPEMKEKIGNLPFQSYRPTQKNILVIGPVPGQKYSEIAFPILSPNPETNKDVHFLKYPIYVGGNRGRGQIYPDGSKSNNTVSNATAAGIVSKIIRKERGGYEITIADASNGRQVVDIIPPGPELLVSEGESLKVDQPLTSNPNVGGFGQGDAEIVLQDPLRVQGLLFFLTSVLLAQIFLVLKKKQFEKVQLSEMNF.

A signal peptide spans 1-35 (MQTRKTLSWIKEEITRSISLSLMLSIITHASLSNA). 4 residues coordinate heme: tyrosine 36, cysteine 56, cysteine 59, and histidine 60. Residues 286 to 306 (VQGLLFFLTSVLLAQIFLVLK) traverse the membrane as a helical segment.

This sequence belongs to the cytochrome f family. As to quaternary structure, the 4 large subunits of the cytochrome b6-f complex are cytochrome b6, subunit IV (17 kDa polypeptide, petD), cytochrome f and the Rieske protein, while the 4 small subunits are PetG, PetL, PetM and PetN. The complex functions as a dimer. Requires heme as cofactor.

Its subcellular location is the plastid. The protein localises to the chloroplast thylakoid membrane. Component of the cytochrome b6-f complex, which mediates electron transfer between photosystem II (PSII) and photosystem I (PSI), cyclic electron flow around PSI, and state transitions. This is Cytochrome f from Pelargonium hortorum (Common geranium).